We begin with the raw amino-acid sequence, 260 residues long: Thiazole synthase (260 aa).

The Schiff-base intermediate with DXP role is filled by K102. 1-deoxy-D-xylulose 5-phosphate-binding positions include G163, 189-190, and 211-212; these read AG and NT.

It belongs to the ThiG family. As to quaternary structure, homotetramer. Forms heterodimers with either ThiH or ThiS.

It is found in the cytoplasm. The enzyme catalyses [ThiS sulfur-carrier protein]-C-terminal-Gly-aminoethanethioate + 2-iminoacetate + 1-deoxy-D-xylulose 5-phosphate = [ThiS sulfur-carrier protein]-C-terminal Gly-Gly + 2-[(2R,5Z)-2-carboxy-4-methylthiazol-5(2H)-ylidene]ethyl phosphate + 2 H2O + H(+). Its pathway is cofactor biosynthesis; thiamine diphosphate biosynthesis. Its function is as follows. Catalyzes the rearrangement of 1-deoxy-D-xylulose 5-phosphate (DXP) to produce the thiazole phosphate moiety of thiamine. Sulfur is provided by the thiocarboxylate moiety of the carrier protein ThiS. In vitro, sulfur can be provided by H(2)S. The polypeptide is Thiazole synthase (Geotalea uraniireducens (strain Rf4) (Geobacter uraniireducens)).